The primary structure comprises 591 residues: MSLLLAPPSYFPFRGLRRSTAAKQPPCLRLVKCTADRQSPEAARRSAHYQPNMWSDDYIQSLTVESPLKVEEKEQTKKLMLLKERIAEVICEGKEVEEQLRLIDHLQQLGVAYHFKDDIKASLRNIHSSLEEISSTIIFKDGLHASALLFRLLRENGFSISEDIFEEFRDEKGQYFRSDGLKNQTDQAMLSLYEASYYEKDGEMVLQEAMECTTKHLENLLEEEGSDLKLKEQAAHALELPLNWRMERLHARWFIEACQREVMVIDNPLLLEFAKLDFNAVQSIYKKELSALSRWWTKLGVVEKLPFARDRLTENYLWTVGWAFEPEHWSFRDAQTKGNCFVTMIDDVYDVYGTLDELELFTHVVDRWDINAIDQLPDYMKILFLALFNTVNDDGYKVMKEKGLDVIPYLKRSWADLCKAYLVEAKWYHRGYKPTINEYLDNTWISISGPAIFTNAYCMANNLTKQDLERFSEYPAIAKHSSMLGRLYNDLATSTAEIERGDVPKSIQCCMHERGVSEGVAREQVKELIRGNWRCMNGDRAAASSFEEMLKTVAVDIARASQFFYHNGDKYGKADGETMTQVMSLLINPII.

The N-terminal 46 residues, 1–46 (MSLLLAPPSYFPFRGLRRSTAAKQPPCLRLVKCTADRQSPEAARRS), are a transit peptide targeting the chloroplast. The Mg(2+) site is built by Asp-346, Asp-350, and Glu-497. A DDXXD motif motif is present at residues 346-350 (DDVYD).

The protein belongs to the terpene synthase family. Tpsa subfamily. It depends on Mg(2+) as a cofactor. Mn(2+) is required as a cofactor. As to expression, highly expressed in flowers, petals and sepals, but almost undetectable in vegetative organs.

It localises to the plastid. The protein localises to the chloroplast. The catalysed reaction is (2E)-geranyl diphosphate + H2O = (R)-linalool + diphosphate. The enzyme catalyses (2E)-geranyl diphosphate + H2O = (S)-linalool + diphosphate. It carries out the reaction (2E,6E)-farnesyl diphosphate = (S)-beta-bisabolene + diphosphate. It catalyses the reaction (2E,6E)-farnesyl diphosphate = (E,R)-alpha-bisabolene + diphosphate. The catalysed reaction is (2E,6E)-farnesyl diphosphate = (E)-beta-farnesene + diphosphate. The enzyme catalyses (2E,6E)-farnesyl diphosphate = beta-sesquiphellandrene + diphosphate. It carries out the reaction (2E,6E)-farnesyl diphosphate = (1S,5S,6R)-alpha-bergamotene + diphosphate. The protein operates within secondary metabolite biosynthesis; terpenoid biosynthesis. In terms of biological role, sesquiterpene and monoterpene synthase involved in the biosynthesis of volatile compounds present in floral scent. Mediates the conversion of (2E)-geranyl diphosphate (GPP) into linalool, with trace levels of myrcene, limonene and (Z)-beta-ocimene. Also acts as a sesquiterpene synthase by catalyzing the conversion of farnesyl diphosphate (FPP) to alpha-bergamotene and beta-bisabolene and to minor products including alpha-curcumene, cis-alpha-bisabolene, beta-farnesene and beta-sesquiphellandrene, as well as seven other unidentified sesquiterpenes. This is Monoterpene synthase 8, chloroplastic from Hedychium coronarium (White butterfly ginger-lily).